A 579-amino-acid chain; its full sequence is XK-related protein 7 (579 aa).

Positions 1–18 (MAAKSDGAAASASPDPEG) are enriched in low complexity. Residues 1–40 (MAAKSDGAAASASPDPEGAAGGARGSAGGRGEAAAAAGPP) form a disordered region. Residues 19–31 (AAGGARGSAGGRG) show a composition bias toward gly residues. 2 helical membrane passes run 59–79 (WVLCALLVFFSDGATDLWLAA) and 89–109 (YFSLTLLFVLLPSLVVQLLSF). Residues 146–165 (GAFRTKEGSPEPGPQPAPSS) are disordered. A run of 5 helical transmembrane segments spans residues 260–280 (LLPALSTSASLVSLAWTLASY), 314–334 (GLAFALFASVYKLYFGIFIVA), 355–375 (WEEIIYNMVVGIIYIFCWFNV), 384–404 (MTLYHCIVLLENAALTGFWYS), and 415–435 (LIMVCVVASSFALGIFFMCVY). The tract at residues 466–510 (ADAITSPPRSLPRTTGAERDGASAGERAGTPTPPVFQVRPGLPPT) is disordered.

This sequence belongs to the XK family.

It is found in the cell membrane. The polypeptide is XK-related protein 7 (Homo sapiens (Human)).